The sequence spans 77 residues: Large ribosomal subunit protein bL31 (77 aa).

Belongs to the bacterial ribosomal protein bL31 family. Type A subfamily. As to quaternary structure, part of the 50S ribosomal subunit.

Functionally, binds the 23S rRNA. This Paramagnetospirillum magneticum (strain ATCC 700264 / AMB-1) (Magnetospirillum magneticum) protein is Large ribosomal subunit protein bL31.